We begin with the raw amino-acid sequence, 379 residues long: Proton extrusion protein PxcA (379 aa).

4 helical membrane passes run 153 to 173, 254 to 274, 300 to 320, and 337 to 357; these read TLVS…LQQI, AIKN…VCLF, FVII…GWTV, and FIDL…KYWI.

It belongs to the CemA family.

Its subcellular location is the cell inner membrane. Required for H(+) efflux immediately after light irradiation to form a rapid H(+) concentration gradient across the thylakoid membranes. Together with PxcL, contributes to transient H(+) uptake following dark to light transition. The polypeptide is Proton extrusion protein PxcA (Synechococcus sp. (strain RCC307)).